The following is a 1052-amino-acid chain: Calmin (1052 aa).

Residues 1-288 (MAAQEWDWFQ…IVTYVAQFLE (288 aa)) are actin-binding. Residues 32–139 (NVQKRTFTRW…LIWNIILFFQ (108 aa)) form the Calponin-homology (CH) 1 domain. Residues 148 to 168 (SRSSPSSSLSPGSGGTDSDSS) show a composition bias toward low complexity. The segment at 148 to 178 (SRSSPSSSLSPGSGGTDSDSSYPPTPTTERS) is disordered. Residues 187 to 291 (RKAIKTLLSW…YVAQFLERFP (105 aa)) form the Calponin-homology (CH) 2 domain. 4 disordered regions span residues 391–420 (STGK…SNSL), 455–545 (KATK…TLLA), 585–727 (STSQ…SPPL), and 758–929 (GEDL…DSSI). Basic and acidic residues-rich tracts occupy residues 455-465 (KATKELSKQDG) and 472-495 (VSKE…DKVP). Over residues 509–529 (AQPSQDSSFCNGTVESPSSQG) the composition is skewed to polar residues. Position 537 is a phosphoserine (serine 537). Basic and acidic residues-rich tracts occupy residues 594 to 614 (PSSH…AEKP), 622 to 651 (PRAE…EDQG), and 659 to 669 (PADKKPKVYEK). A Phosphoserine modification is found at serine 679. At threonine 710 the chain carries Phosphothreonine. Over residues 711 to 720 (LRSHSEEGLD) the composition is skewed to basic and acidic residues. The residue at position 724 (serine 724) is a Phosphoserine. The segment covering 759–773 (EDLKSEDTDLEHPED) has biased composition (basic and acidic residues). Residues 780–791 (REEEADEDEEEA) are compositionally biased toward acidic residues. Low complexity predominate over residues 792–801 (QSSQSSCSFS). A compositionally biased stretch (basic and acidic residues) spans 836–849 (SHEDHQPKETKENG). The residue at position 856 (serine 856) is a Phosphoserine. The segment covering 880–889 (SKKKEKRKHM) has biased composition (basic residues). Serine 925 bears the Phosphoserine mark. Residues 1027–1047 (VIYFILFLWLLVYCLLLFPQL) form a helical; Anchor for type IV membrane protein membrane-spanning segment.

As to expression, expressed in testis. Expressed during testis maturation process and in maturing spermatids. In brain, it is expressed in neurons of the hippocampus, cerebral cortex, and thalamus, Purkinje cells, and also in the choroid plexus and ependymal cells. Expressed predominantly in dendrites and cell bodies of the neurons, but not in axons. The level of expression increases during the period of maturation of the mouse brain after birth.

It localises to the membrane. It is found in the cytoplasm. This is Calmin (Clmn) from Mus musculus (Mouse).